A 220-amino-acid chain; its full sequence is Charged multivesicular body protein 4b (220 aa).

2 disordered regions span residues 1–22 (MSLF…SPQE) and 180–220 (EIGD…WAAN). Coiled coils occupy residues 21-88 (QEAI…STIE) and 123-181 (IDKV…LLEI).

This sequence belongs to the SNF7 family. Probable core component of the endosomal sorting required for transport complex III (ESCRT-III). ESCRT-III components are thought to multimerize to form a flat lattice on the perimeter membrane of the endosome.

The protein resides in the cytoplasm. It is found in the cytosol. It localises to the late endosome membrane. Its subcellular location is the midbody. Probable core component of the endosomal sorting required for transport complex III (ESCRT-III) which is involved in multivesicular bodies (MVBs) formation and sorting of endosomal cargo proteins into MVBs. MVBs contain intraluminal vesicles (ILVs) that are generated by invagination and scission from the limiting membrane of the endosome and mostly are delivered to lysosomes enabling degradation of membrane proteins, such as stimulated growth factor receptors, lysosomal enzymes and lipids. The polypeptide is Charged multivesicular body protein 4b (chmp4b) (Danio rerio (Zebrafish)).